Here is a 507-residue protein sequence, read N- to C-terminus: Maturase K (507 aa).

This sequence belongs to the intron maturase 2 family. MatK subfamily.

The protein resides in the plastid. The protein localises to the chloroplast. Functionally, usually encoded in the trnK tRNA gene intron. Probably assists in splicing its own and other chloroplast group II introns. This Nymphaea alba (White water-lily) protein is Maturase K.